Consider the following 66-residue polypeptide: Large ribosomal subunit protein uL29 (66 aa).

The protein belongs to the universal ribosomal protein uL29 family.

The protein is Large ribosomal subunit protein uL29 of Borreliella afzelii (strain PKo) (Borrelia afzelii).